Consider the following 183-residue polypeptide: NADH dehydrogenase [ubiquinone] iron-sulfur protein 4, mitochondrial (183 aa).

The transit peptide at 1-28 directs the protein to the mitochondrion; that stretch reads MSALRQVMCRSTASLQLYQANRAAAARW. Ser-181 carries the post-translational modification Phosphoserine.

Belongs to the complex I NDUFS4 subunit family.

The protein resides in the mitochondrion inner membrane. Accessory subunit of the mitochondrial membrane respiratory chain NADH dehydrogenase (Complex I), that is believed not to be involved in catalysis. Complex I functions in the transfer of electrons from NADH to the respiratory chain. The immediate electron acceptor for the enzyme is believed to be ubiquinone. This Drosophila melanogaster (Fruit fly) protein is NADH dehydrogenase [ubiquinone] iron-sulfur protein 4, mitochondrial.